We begin with the raw amino-acid sequence, 167 residues long: Claudin domain-containing protein 2 (167 aa).

The next 4 helical transmembrane spans lie at 7 to 27 (LQSG…LSTA), 59 to 79 (LAVT…GMVM), 96 to 116 (TSAF…GYTV), and 134 to 154 (WLAL…DMIM).

It belongs to the PMP-22/EMP/MP20 family.

Its subcellular location is the membrane. This is Claudin domain-containing protein 2 (CLDND2) from Homo sapiens (Human).